The following is a 478-amino-acid chain: Proline--tRNA ligase (478 aa).

The protein belongs to the class-II aminoacyl-tRNA synthetase family. ProS type 3 subfamily. In terms of assembly, homodimer.

It is found in the cytoplasm. The catalysed reaction is tRNA(Pro) + L-proline + ATP = L-prolyl-tRNA(Pro) + AMP + diphosphate. In terms of biological role, catalyzes the attachment of proline to tRNA(Pro) in a two-step reaction: proline is first activated by ATP to form Pro-AMP and then transferred to the acceptor end of tRNA(Pro). The chain is Proline--tRNA ligase from Clostridium novyi (strain NT).